Reading from the N-terminus, the 235-residue chain is Large ribosomal subunit protein uL1 (235 aa).

The protein belongs to the universal ribosomal protein uL1 family. As to quaternary structure, part of the 50S ribosomal subunit.

In terms of biological role, binds directly to 23S rRNA. The L1 stalk is quite mobile in the ribosome, and is involved in E site tRNA release. Its function is as follows. Protein L1 is also a translational repressor protein, it controls the translation of the L11 operon by binding to its mRNA. The protein is Large ribosomal subunit protein uL1 of Mycobacteroides abscessus (strain ATCC 19977 / DSM 44196 / CCUG 20993 / CIP 104536 / JCM 13569 / NCTC 13031 / TMC 1543 / L948) (Mycobacterium abscessus).